Consider the following 157-residue polypeptide: Ciliary microtubule inner protein 5 (157 aa).

2 disordered regions span residues 1 to 57 (MGSR…SALG) and 92 to 124 (DPMG…AVGS). The segment covering 92 to 109 (DPMGNKKEPVKLPDHVPR) has biased composition (basic and acidic residues).

The protein localises to the cell projection. Its subcellular location is the cilium. This is Ciliary microtubule inner protein 5 (CIMIP5) from Bos taurus (Bovine).